Reading from the N-terminus, the 117-residue chain is NADH-ubiquinone oxidoreductase chain 3 (117 aa).

The next 3 helical transmembrane spans lie at 1 to 21 (MLSL…LLLV), 56 to 76 (FFLV…ILPY), and 86 to 106 (TFYN…GLMY).

The protein belongs to the complex I subunit 3 family.

The protein resides in the mitochondrion membrane. It catalyses the reaction a ubiquinone + NADH + 5 H(+)(in) = a ubiquinol + NAD(+) + 4 H(+)(out). Its function is as follows. Core subunit of the mitochondrial membrane respiratory chain NADH dehydrogenase (Complex I) that is believed to belong to the minimal assembly required for catalysis. Complex I functions in the transfer of electrons from NADH to the respiratory chain. The immediate electron acceptor for the enzyme is believed to be ubiquinone. This is NADH-ubiquinone oxidoreductase chain 3 (ND3) from Branchiostoma lanceolatum (Common lancelet).